Here is an 87-residue protein sequence, read N- to C-terminus: Homeotic protein ultrabithorax (87 aa).

Positions 22–27 match the Antp-type hexapeptide motif; the sequence is FYPWMA.

This sequence belongs to the Antp homeobox family. In terms of tissue distribution, in the embryo, expression is seen in the epidermis, somatic and visceral mesoderm, and the peripheral and central nervous system.

Its subcellular location is the nucleus. In terms of biological role, sequence-specific transcription factor which is part of a developmental regulatory system that provides cells with specific positional identities on the anterior-posterior axis. Binds the consensus region 5'-TTAAT[GT][GA]-3'. This homeotic protein controls development of the cells in the posterior thoracic and first abdominal segments. It activates the synthesis of the decapentaplegic (DPP) growth factor. In Drosophila hydei (Fruit fly), this protein is Homeotic protein ultrabithorax (Ubx).